Consider the following 313-residue polypeptide: NADH-ubiquinone oxidoreductase chain 1 (313 aa).

8 consecutive transmembrane segments (helical) span residues 2 to 22 (ILSV…VAFL), 72 to 92 (VFFF…MPVP), 102 to 122 (FAVL…MASG), 148 to 168 (LGLI…AQFF), 173 to 193 (EVML…STVA), 222 to 244 (FALF…ALLF), 249 to 268 (FSLL…YLWF), and 293 to 313 (LGLL…GGGL).

Belongs to the complex I subunit 1 family.

The protein localises to the mitochondrion inner membrane. It catalyses the reaction a ubiquinone + NADH + 5 H(+)(in) = a ubiquinol + NAD(+) + 4 H(+)(out). Core subunit of the mitochondrial membrane respiratory chain NADH dehydrogenase (Complex I) that is believed to belong to the minimal assembly required for catalysis. Complex I functions in the transfer of electrons from NADH to the respiratory chain. The immediate electron acceptor for the enzyme is believed to be ubiquinone. The sequence is that of NADH-ubiquinone oxidoreductase chain 1 (ND1) from Branchiostoma lanceolatum (Common lancelet).